A 248-amino-acid polypeptide reads, in one-letter code: Secreted and transmembrane protein 1 (248 aa).

The N-terminal stretch at 1–28 is a signal peptide; it reads MQTCPLAFPGHVSQALGTLLFLAASLSA. At 29 to 145 the chain is on the extracellular side; it reads QNEGWDSPIC…AEPQSAPDTG (117 aa). Residues Cys38 and Cys55 are joined by a disulfide bond. N-linked (GlcNAc...) asparagine glycosylation occurs at Asn56. The helical transmembrane segment at 146–166 threads the bilayer; that stretch reads FWPVPAVVTAVFILLVALVMF. Residues 167-248 are Cytoplasmic-facing; sequence AWYRCRCSQQ…QPLFPYAADP (82 aa).

It belongs to the SECTM family. Interacts with CD7. As to expression, detected at the highest levels in peripheral blood leukocytes and breast cancer cell lines. Found in leukocytes of the myeloid lineage, with the strongest expression observed in granulocytes and no detectable expression in lymphocytes. Expressed in thymic epithelial cells and fibroblasts.

It is found in the cell membrane. The protein localises to the secreted. May be involved in thymocyte signaling. The polypeptide is Secreted and transmembrane protein 1 (SECTM1) (Homo sapiens (Human)).